A 207-amino-acid polypeptide reads, in one-letter code: NAD(P)H-quinone oxidoreductase subunit K, chloroplastic (207 aa).

Positions 47, 48, 112, and 143 each coordinate [4Fe-4S] cluster.

This sequence belongs to the complex I 20 kDa subunit family. As to quaternary structure, NDH is composed of at least 16 different subunits, 5 of which are encoded in the nucleus. [4Fe-4S] cluster serves as cofactor.

Its subcellular location is the plastid. The protein resides in the chloroplast thylakoid membrane. The enzyme catalyses a plastoquinone + NADH + (n+1) H(+)(in) = a plastoquinol + NAD(+) + n H(+)(out). The catalysed reaction is a plastoquinone + NADPH + (n+1) H(+)(in) = a plastoquinol + NADP(+) + n H(+)(out). Its function is as follows. NDH shuttles electrons from NAD(P)H:plastoquinone, via FMN and iron-sulfur (Fe-S) centers, to quinones in the photosynthetic chain and possibly in a chloroplast respiratory chain. The immediate electron acceptor for the enzyme in this species is believed to be plastoquinone. Couples the redox reaction to proton translocation, and thus conserves the redox energy in a proton gradient. This chain is NAD(P)H-quinone oxidoreductase subunit K, chloroplastic, found in Psilotum nudum (Whisk fern).